The following is a 153-amino-acid chain: Gastric inhibitory polypeptide (153 aa).

Residues 1-21 form the signal peptide; sequence MVATKTFALLLLSLFLAVGLG. Propeptides lie at residues 22–50 and 95–153; these read EKKE…PRGP and EARA…LRSR. Residues 102–125 are disordered; sequence ASQANRKEEEAVEPQSSPAKNPSD.

It belongs to the glucagon family.

The protein resides in the secreted. In terms of biological role, potent stimulator of insulin secretion and relatively poor inhibitor of gastric acid secretion. This Homo sapiens (Human) protein is Gastric inhibitory polypeptide (GIP).